The following is a 471-amino-acid chain: UDP-N-acetylmuramate--L-alanine ligase (471 aa).

Residue 114–120 (GTHGKTT) participates in ATP binding.

This sequence belongs to the MurCDEF family.

It is found in the cytoplasm. The enzyme catalyses UDP-N-acetyl-alpha-D-muramate + L-alanine + ATP = UDP-N-acetyl-alpha-D-muramoyl-L-alanine + ADP + phosphate + H(+). Its pathway is cell wall biogenesis; peptidoglycan biosynthesis. Cell wall formation. The polypeptide is UDP-N-acetylmuramate--L-alanine ligase (Chlorobaculum parvum (strain DSM 263 / NCIMB 8327) (Chlorobium vibrioforme subsp. thiosulfatophilum)).